Consider the following 219-residue polypeptide: Octanoyltransferase (219 aa).

One can recognise a BPL/LPL catalytic domain in the interval 32-207 (ADSGDEIWLL…HLVRQLGYAQ (176 aa)). Substrate contacts are provided by residues 71–78 (RGGQVTYH), 138–140 (SLG), and 151–153 (GLA). The active-site Acyl-thioester intermediate is Cys169.

It belongs to the LipB family.

It is found in the cytoplasm. It carries out the reaction octanoyl-[ACP] + L-lysyl-[protein] = N(6)-octanoyl-L-lysyl-[protein] + holo-[ACP] + H(+). Its pathway is protein modification; protein lipoylation via endogenous pathway; protein N(6)-(lipoyl)lysine from octanoyl-[acyl-carrier-protein]: step 1/2. Catalyzes the transfer of endogenously produced octanoic acid from octanoyl-acyl-carrier-protein onto the lipoyl domains of lipoate-dependent enzymes. Lipoyl-ACP can also act as a substrate although octanoyl-ACP is likely to be the physiological substrate. This Stutzerimonas stutzeri (strain A1501) (Pseudomonas stutzeri) protein is Octanoyltransferase.